The following is a 195-amino-acid chain: Protein GrpE (195 aa).

The segment at 1–30 is disordered; the sequence is MSEQEKVEQEEISAELETQNEQEKPMEETE. Residues 10–20 are compositionally biased toward acidic residues; sequence EEISAELETQN.

It belongs to the GrpE family. In terms of assembly, homodimer.

It is found in the cytoplasm. In terms of biological role, participates actively in the response to hyperosmotic and heat shock by preventing the aggregation of stress-denatured proteins, in association with DnaK and GrpE. It is the nucleotide exchange factor for DnaK and may function as a thermosensor. Unfolded proteins bind initially to DnaJ; upon interaction with the DnaJ-bound protein, DnaK hydrolyzes its bound ATP, resulting in the formation of a stable complex. GrpE releases ADP from DnaK; ATP binding to DnaK triggers the release of the substrate protein, thus completing the reaction cycle. Several rounds of ATP-dependent interactions between DnaJ, DnaK and GrpE are required for fully efficient folding. This is Protein GrpE from Histophilus somni (strain 2336) (Haemophilus somnus).